The following is a 129-amino-acid chain: N16.5 matrix protein (129 aa).

Residues 1 to 23 (MTCTLRWTITALVLLGICHLARP) form the signal peptide. 5 consecutive repeat copies span residues 91 to 92 (NG), 93 to 94 (NG), 95 to 96 (NG), 97 to 98 (NG), and 99 to 100 (NG). Positions 91–100 (NGNGNGNGNG) are 5 X 2 AA tandem repeats of N-G.

It belongs to the N16 matrix protein family. As to quaternary structure, heterooligomer; disulfide-linked. Pif97, Pif80, N16 and other proteins form a complex. In terms of tissue distribution, component of conchiolin, the organic matrix of nacre. Specifically expressed in mantle epithelium.

It is found in the secreted. It localises to the extracellular space. Its subcellular location is the extracellular matrix. Functionally, may be specifically involved in the formation of the nacreous layer. The polypeptide is N16.5 matrix protein (Pinctada fucata (Akoya pearl oyster)).